Consider the following 569-residue polypeptide: Glucose-6-phosphate isomerase, cytosolic 2A (569 aa).

Glu360 serves as the catalytic Proton donor. Active-site residues include His391 and Lys516.

This sequence belongs to the GPI family. In terms of assembly, homodimer.

The protein resides in the cytoplasm. The enzyme catalyses alpha-D-glucose 6-phosphate = beta-D-fructose 6-phosphate. It participates in carbohydrate degradation; glycolysis; D-glyceraldehyde 3-phosphate and glycerone phosphate from D-glucose: step 2/4. This Clarkia lewisii (Farewell-to-spring) protein is Glucose-6-phosphate isomerase, cytosolic 2A (PGIC2-A).